A 186-amino-acid polypeptide reads, in one-letter code: Ribulose bisphosphate carboxylase small subunit, chloroplastic 6 (186 aa).

A chloroplast-targeting transit peptide spans 1–60; that stretch reads MASSMLSNAAVATTAASRSAGAQASMVAPFTGLKSVSAFPVTRKSSNDLSTVPSNGGKVQ.

This sequence belongs to the RuBisCO small chain family. In terms of assembly, heterohexadecamer of 8 large and 8 small subunits.

The protein resides in the plastid. The protein localises to the chloroplast. Its function is as follows. RuBisCO catalyzes two reactions: the carboxylation of D-ribulose 1,5-bisphosphate, the primary event in carbon dioxide fixation, as well as the oxidative fragmentation of the pentose substrate. Both reactions occur simultaneously and in competition at the same active site. Although the small subunit is not catalytic it is essential for maximal activity. This is Ribulose bisphosphate carboxylase small subunit, chloroplastic 6 from Mesembryanthemum crystallinum (Common ice plant).